The following is a 485-amino-acid chain: Cysteine--tRNA ligase (485 aa).

A Zn(2+)-binding site is contributed by Cys29. The short motif at 31 to 41 (ATVQGMPHVGH) is the 'HIGH' region element. Positions 174 to 198 (QRVEDMQDAPDADPRGKRDPHDFAL) are disordered. Basic and acidic residues predominate over residues 185-197 (ADPRGKRDPHDFA). The Zn(2+) site is built by Cys227, His252, and Glu256. The short motif at 283 to 287 (KMSKS) is the 'KMSKS' region element. Residue Lys286 participates in ATP binding.

Belongs to the class-I aminoacyl-tRNA synthetase family. As to quaternary structure, monomer. Zn(2+) is required as a cofactor.

It is found in the cytoplasm. The catalysed reaction is tRNA(Cys) + L-cysteine + ATP = L-cysteinyl-tRNA(Cys) + AMP + diphosphate. This Micrococcus luteus (strain ATCC 4698 / DSM 20030 / JCM 1464 / CCM 169 / CCUG 5858 / IAM 1056 / NBRC 3333 / NCIMB 9278 / NCTC 2665 / VKM Ac-2230) (Micrococcus lysodeikticus) protein is Cysteine--tRNA ligase.